The following is a 628-amino-acid chain: DNA ligase (628 aa).

Residues 36–40 (DVEYD), 85–86 (SL), and E117 each bind NAD(+). K119 acts as the N6-AMP-lysine intermediate in catalysis. R140, E174, K309, and K333 together coordinate NAD(+). Residues C427, C430, C446, and C452 each coordinate Zn(2+).

Belongs to the NAD-dependent DNA ligase family. LigA subfamily. Mg(2+) serves as cofactor. Requires Mn(2+) as cofactor.

It catalyses the reaction NAD(+) + (deoxyribonucleotide)n-3'-hydroxyl + 5'-phospho-(deoxyribonucleotide)m = (deoxyribonucleotide)n+m + AMP + beta-nicotinamide D-nucleotide.. Functionally, DNA ligase that catalyzes the formation of phosphodiester linkages between 5'-phosphoryl and 3'-hydroxyl groups in double-stranded DNA using NAD as a coenzyme and as the energy source for the reaction. It is essential for DNA replication and repair of damaged DNA. This is DNA ligase from Tropheryma whipplei (strain TW08/27) (Whipple's bacillus).